Reading from the N-terminus, the 421-residue chain is Transcription factor IIIB 50 kDa subunit (421 aa).

The segment at 2-36 (PGRGRCPDCGSAELVEDSHYSQNQLVCSDCGCVVT) adopts a TFIIB-type zinc-finger fold. Zn(2+)-binding residues include C7, C10, C28, and C31. A run of 2 repeats spans residues 72 to 157 (GLRR…MQIV) and 173 to 249 (VKTY…SLAR). The segment at 108–114 (TARLQKK) is interaction with target DNA. The tract at residues 325 to 357 (ELQGQGQGQGLGDEDVGSSSLELPAGKRPSSPA) is disordered. S355 is modified (phosphoserine). The required for the formation of a ternary complex with DNA and TBP; not required for interaction with TBP in the absence of DNA stretch occupies residues 359–365 (LLPPCML). C363 is modified (cysteine sulfenic acid (-SOH)). Residues 367–421 (PPKRVCPAPPVSMVTGDEDISDSEIEQYLRTPQEVRDFQKAQAARQAAQGTPNPP) are required for interaction with TBP and formation of a ternary complex with DNA and TBP.

The protein belongs to the TFIIB family. In terms of assembly, component of TFIIIB complexes. The TFIIIB complex has two activities, alpha and beta. The TFIIIB-alpha activity complex is composed of TBP, BDP1, and a complex containing both BRF2 and at least four stably associated proteins; this complex inhibits the transcription by pol III via its phosphorylation by CK2; YY1 facilitates the TFIIIB-alpha complex formation. Interacts with TBP; this interaction promotes recruitment of BRF2 to TATA box-containing promoters. Interacts with TBP and the BURE sequence (GC-rich sequence downstream from the TATA box) to form a strong ternary complex which is joined by BDP1; this ternary complex stimulates pol III transcription. Forms a trimeric complex composed of TBP, BRF2 and mini-SNAPc complex (SNAP43, SNAP50, and the N-terminal third of SNAP190) on the promoter. Assembly of the TBP-BRF2 complex is stimulated by SNAP190. Interacts with MAF1 and SNAPC4. In terms of processing, in response to oxidative stress, Cys-363 is reversibly oxidized to cysteine sulfenic acid. Oxidation of Cys-363 impairs formation of a ternary complex with TBP and DNA and down-regulates expression of target genes in response to oxidative stress.

It localises to the nucleus. General activator of RNA polymerase III transcription. Factor exclusively required for RNA polymerase III transcription of genes with promoter elements upstream of the initiation sites. Contributes to the regulation of gene expression; functions as activator in the absence of oxidative stress. Down-regulates expression of target genes in response to oxidative stress. Overexpression protects cells against apoptosis in response to oxidative stress. This chain is Transcription factor IIIB 50 kDa subunit (BRF2), found in Bos taurus (Bovine).